Here is a 184-residue protein sequence, read N- to C-terminus: Probable archaeosortase E (184 aa).

Helical transmembrane passes span 27–47 (ILFL…LSYF), 86–106 (VVEE…IIVY), 114–134 (IIGI…IVLI), and 151–171 (IAGY…YLKI). The Acyl-thioester intermediate role is filled by C90. The active-site Proton donor is R130.

Belongs to the exosortase/archaeosortase family. Archaeosortase E subfamily.

The protein localises to the cell membrane. Functionally, transpeptidase that recognizes and modifies its substrate by proteolytic cleavage of a sorting signal. Following cleavage, a covalent intermediate is formed via a thioester bond between the archaeosortase and its substrate, which is then transferred and covalently attached to the cell membrane. This Methanocaldococcus jannaschii (strain ATCC 43067 / DSM 2661 / JAL-1 / JCM 10045 / NBRC 100440) (Methanococcus jannaschii) protein is Probable archaeosortase E.